We begin with the raw amino-acid sequence, 343 residues long: Flavonoid 4'-O-methyltransferase 4 (343 aa).

D211 is an S-adenosyl-L-methionine binding site. Catalysis depends on H249, which acts as the Proton acceptor.

This sequence belongs to the class I-like SAM-binding methyltransferase superfamily. Cation-independent O-methyltransferase family. In terms of assembly, homodimer.

It carries out the reaction apigenin + S-adenosyl-L-methionine = acacetin + S-adenosyl-L-homocysteine + H(+). The catalysed reaction is kaempferol + S-adenosyl-L-methionine = kaempferide + S-adenosyl-L-homocysteine + H(+). It catalyses the reaction isorhamnetin + S-adenosyl-L-methionine = 3',4'-O-dimethylquercetin + S-adenosyl-L-homocysteine + 2 H(+). The enzyme catalyses scutellarein + S-adenosyl-L-methionine = scutellarein 4'-methyl ether + S-adenosyl-L-homocysteine + H(+). It carries out the reaction (2S)-naringenin + S-adenosyl-L-methionine = (2S)-naringenin 4'-methyl ether + S-adenosyl-L-homocysteine + H(+). The catalysed reaction is 4',7,8-trihydroxyflavone + S-adenosyl-L-methionine = 7,8-dihydroxy-4'-methoxyflavone + S-adenosyl-L-homocysteine + H(+). It catalyses the reaction taxifolin + S-adenosyl-L-methionine = taxifolin 4'-methyl ether + S-adenosyl-L-homocysteine + H(+). It functions in the pathway flavonoid metabolism. Its function is as follows. Flavonoid 4'-O-methyltransferase involved in the biosynthesis of polymethoxylated flavonoids natural products such as pebrellin, aroma compounds which contribute to the flavor of peppermint, and exhibit pharmacological activities such as anti-allergic, anti-oxidant, antibacterial, anti-proliferative, and anti-inflammatory effects. Catalyzes S-adenosylmethionine-dependent regioselective 4'-O-methylation of flavonoids; active on various hydroxylated flavonoid substrates, including isorhamnetin, kaempferol, apigenin (API), scutellarein (6-hydroxy-apigenin, 6-OH-API, SCU), taxifolin, 7,8,4'-trihydroxy-flavone and naringenin (NAR), and, with a lower efficiency, quercetin, rhamnetin, luteolin (LUT) and 7,8,3',4'-tetrahydroxy-flavone. This is Flavonoid 4'-O-methyltransferase 4 from Mentha piperita (Peppermint).